A 705-amino-acid chain; its full sequence is Translation initiation factor IF-2 (705 aa).

Positions 40–124 (DDQIKALDKK…QPAAPKEIPS (85 aa)) are disordered. Residues 41-58 (DQIKALDKKFKKEQKNDN) are compositionally biased toward basic and acidic residues. The segment covering 59–77 (KQSTQNNHQKSNNQNQNKG) has biased composition (low complexity). Basic residues predominate over residues 94–108 (KGNKKNNRNNKKNNK). The tr-type G domain occupies 207 to 376 (ERPAVVTIMG…GLVAEVQELK (170 aa)). Residues 216 to 223 (GHVDHGKT) are G1. 216–223 (GHVDHGKT) serves as a coordination point for GTP. Positions 241 to 245 (GITQH) are G2. The tract at residues 262–265 (DTPG) is G3. GTP contacts are provided by residues 262 to 266 (DTPGH) and 316 to 319 (NKID). The tract at residues 316 to 319 (NKID) is G4. The interval 352–354 (SAL) is G5.

It belongs to the TRAFAC class translation factor GTPase superfamily. Classic translation factor GTPase family. IF-2 subfamily.

The protein localises to the cytoplasm. One of the essential components for the initiation of protein synthesis. Protects formylmethionyl-tRNA from spontaneous hydrolysis and promotes its binding to the 30S ribosomal subunits. Also involved in the hydrolysis of GTP during the formation of the 70S ribosomal complex. This is Translation initiation factor IF-2 from Staphylococcus aureus (strain Mu3 / ATCC 700698).